The chain runs to 278 residues: Protein MGF 505-3R (278 aa).

Belongs to the asfivirus MGF 505 family.

Its function is as follows. Plays a role in virus cell tropism, and may be required for efficient virus replication in macrophages. The chain is Protein MGF 505-3R from African swine fever virus (isolate Tick/Malawi/Lil 20-1/1983) (ASFV).